A 274-amino-acid polypeptide reads, in one-letter code: 2-dehydro-3-deoxyphosphooctonate aldolase (274 aa).

It belongs to the KdsA family.

The protein resides in the cytoplasm. The catalysed reaction is D-arabinose 5-phosphate + phosphoenolpyruvate + H2O = 3-deoxy-alpha-D-manno-2-octulosonate-8-phosphate + phosphate. It participates in carbohydrate biosynthesis; 3-deoxy-D-manno-octulosonate biosynthesis; 3-deoxy-D-manno-octulosonate from D-ribulose 5-phosphate: step 2/3. The protein operates within bacterial outer membrane biogenesis; lipopolysaccharide biosynthesis. In Rickettsia bellii (strain OSU 85-389), this protein is 2-dehydro-3-deoxyphosphooctonate aldolase.